The primary structure comprises 260 residues: ATP synthase subunit a (260 aa).

The next 5 helical transmembrane spans lie at 27–47, 90–110, 132–154, 208–228, and 230–250; these read FWTV…LFIW, IAPL…MDLI, SADV…YYSI, LIFI…LSVP, and AIFH…LTIV.

It belongs to the ATPase A chain family. F-type ATPases have 2 components, CF(1) - the catalytic core - and CF(0) - the membrane proton channel. CF(1) has five subunits: alpha(3), beta(3), gamma(1), delta(1), epsilon(1). CF(0) has three main subunits: a(1), b(2) and c(9-12). The alpha and beta chains form an alternating ring which encloses part of the gamma chain. CF(1) is attached to CF(0) by a central stalk formed by the gamma and epsilon chains, while a peripheral stalk is formed by the delta and b chains.

It localises to the cell inner membrane. In terms of biological role, key component of the proton channel; it plays a direct role in the translocation of protons across the membrane. This chain is ATP synthase subunit a, found in Aeromonas hydrophila subsp. hydrophila (strain ATCC 7966 / DSM 30187 / BCRC 13018 / CCUG 14551 / JCM 1027 / KCTC 2358 / NCIMB 9240 / NCTC 8049).